The sequence spans 601 residues: Beta-phellandrene synthase (601 aa).

A chloroplast-targeting transit peptide spans 1-35 (MSTISIHHVGILRNPLPSKNKRALINNPWSLSLPR). Positions 356 and 360 each coordinate Mn(2+). The DDXXD motif motif lies at 356–360 (DDVYD). Homodimerization regions lie at residues 362 to 368 (YGTLDEL) and 434 to 471 (EAKW…LSIP). Positions 499 and 507 each coordinate Mn(2+).

This sequence belongs to the terpene synthase family. As to quaternary structure, homodimer. Mn(2+) is required as a cofactor. Requires Mg(2+) as cofactor. Expressed in peltate glandular trichomes. Present at low levels in flowers, leaves and stems.

It is found in the plastid. The protein resides in the chloroplast. It catalyses the reaction (2E)-geranyl diphosphate = beta-phellandrene + diphosphate. The catalysed reaction is (2E)-geranyl diphosphate = (1R,5R)-sabinene + diphosphate. It functions in the pathway secondary metabolite biosynthesis; terpenoid biosynthesis. Involved in the biosynthesis of phenolic monoterpenes natural products. Monoterpene synthase that catalyzes mainly the formation of olefins such as sabinene and beta-phellandrene, and minor amounts of other monoterpenes (e.g. myrcene, gamma-terpinene, alpha-thujene and alpha-pinene) from geranyl diphosphate (GPP). The protein is Beta-phellandrene synthase of Origanum vulgare (Wild marjoram).